Consider the following 299-residue polypeptide: Tetrahydromethanopterin S-methyltransferase subunit E (299 aa).

The next 6 helical transmembrane spans lie at 57 to 79 (AISG…AWAL), 89 to 111 (AIIV…AFLG), 132 to 154 (HIGP…AYLA), 164 to 183 (LPLV…SSTG), 227 to 246 (FCSR…IIFL), and 261 to 283 (LVTK…AVIN).

Belongs to the MtrE family. As to quaternary structure, the complex is composed of 8 subunits; MtrA, MtrB, MtrC, MtrD, MtrE, MtrF, MtrG and MtrH.

The protein resides in the cell membrane. The enzyme catalyses 5-methyl-5,6,7,8-tetrahydromethanopterin + coenzyme M + 2 Na(+)(in) = 5,6,7,8-tetrahydromethanopterin + methyl-coenzyme M + 2 Na(+)(out). It participates in one-carbon metabolism; methanogenesis from CO(2); methyl-coenzyme M from 5,10-methylene-5,6,7,8-tetrahydromethanopterin: step 2/2. Its function is as follows. Part of a complex that catalyzes the formation of methyl-coenzyme M and tetrahydromethanopterin from coenzyme M and methyl-tetrahydromethanopterin. This is an energy-conserving, sodium-ion translocating step. In Methanococcus maripaludis (strain DSM 14266 / JCM 13030 / NBRC 101832 / S2 / LL), this protein is Tetrahydromethanopterin S-methyltransferase subunit E.